The chain runs to 220 residues: Deoxyribose-phosphate aldolase 2 (220 aa).

Asp-89 acts as the Proton donor/acceptor in catalysis. Residue Lys-151 is the Schiff-base intermediate with acetaldehyde of the active site. The active-site Proton donor/acceptor is Lys-180.

Belongs to the DeoC/FbaB aldolase family. DeoC type 1 subfamily.

It localises to the cytoplasm. It carries out the reaction 2-deoxy-D-ribose 5-phosphate = D-glyceraldehyde 3-phosphate + acetaldehyde. Its pathway is carbohydrate degradation; 2-deoxy-D-ribose 1-phosphate degradation; D-glyceraldehyde 3-phosphate and acetaldehyde from 2-deoxy-alpha-D-ribose 1-phosphate: step 2/2. In terms of biological role, catalyzes a reversible aldol reaction between acetaldehyde and D-glyceraldehyde 3-phosphate to generate 2-deoxy-D-ribose 5-phosphate. In Staphylococcus aureus (strain MRSA252), this protein is Deoxyribose-phosphate aldolase 2.